Reading from the N-terminus, the 373-residue chain is Transcription factor bHLH87 (373 aa).

The disordered stretch occupies residues 127–227; it reads SAESENREIT…GGSSNISFQH (101 aa). Over residues 188-218 the composition is skewed to basic and acidic residues; the sequence is PQDDSEKGGFKLIYDENQSKSKKPRTEKERG. A bHLH domain is found at 275–324; sequence ISTDPQTVAARQRRERISEKIRVLQTLVPGGTKMDTASMLDEAANYLKFL.

In terms of assembly, homodimer. Flowers.

It is found in the nucleus. This is Transcription factor bHLH87 (BHLH87) from Arabidopsis thaliana (Mouse-ear cress).